The sequence spans 230 residues: MEKKDEGNPPMAVMGSRDENEDVKSTMRTAETMLRLVPVALCVSALVVMLKNTQTNDYGSLSYSDLGAFRYLVNANGICAGYSLLSAVIVAMPRAWTMPQAWTFFLLDQVLTYVILAAGTVSTEVLYLANKGDTSIAWSAACASFGGFCHKALISTVITFVAVIFYAALSLVSSYKLFSKYDAPVVTQSGEGIKTVTLGSPPPPPPPPPSNLHLHLHAKLACPAHNNSPN.

The interval 1–23 (MEKKDEGNPPMAVMGSRDENEDV) is disordered. At 1–29 (MEKKDEGNPPMAVMGSRDENEDVKSTMRT) the chain is on the cytoplasmic side. The chain crosses the membrane as a helical span at residues 30–50 (AETMLRLVPVALCVSALVVML). Residues 51 to 71 (KNTQTNDYGSLSYSDLGAFRY) lie on the Extracellular side of the membrane. Residues 72-92 (LVNANGICAGYSLLSAVIVAM) form a helical membrane-spanning segment. Residues 93–100 (PRAWTMPQ) are Cytoplasmic-facing. The helical transmembrane segment at 101–121 (AWTFFLLDQVLTYVILAAGTV) threads the bilayer. Residues 122 to 151 (STEVLYLANKGDTSIAWSAACASFGGFCHK) lie on the Extracellular side of the membrane. The chain crosses the membrane as a helical span at residues 152–172 (ALISTVITFVAVIFYAALSLV). At 173–230 (SSYKLFSKYDAPVVTQSGEGIKTVTLGSPPPPPPPPPSNLHLHLHAKLACPAHNNSPN) the chain is on the cytoplasmic side.

The protein belongs to the Casparian strip membrane proteins (CASP) family. Homodimer and heterodimers.

It localises to the cell membrane. The polypeptide is CASP-like protein 2A2 (Populus trichocarpa (Western balsam poplar)).